A 443-amino-acid chain; its full sequence is Protein FAM83A (443 aa).

The segment at 311–403 (DSGVSVMTDS…YYQRNYAPDS (93 aa)) is disordered. The segment covering 315-326 (SVMTDSTPESVN) has biased composition (polar residues). Composition is skewed to low complexity over residues 327–344 (TTSEPFSSTSTASISNDS) and 388–399 (SNYQPNYYQRNY).

It belongs to the FAM83 family.

It is found in the cytoplasm. Its function is as follows. May function in the epidermal growth factor receptor/EGFR signaling pathway. The protein is Protein FAM83A of Xenopus laevis (African clawed frog).